The following is a 1141-amino-acid chain: Membrane-associated protein gex-3 (1141 aa).

It belongs to the HEM-1/HEM-2 family. In terms of assembly, interacts with aco-1, gei-13 and gex-2. Interacts with gex-3. Expressed in neurons.

The protein localises to the cytoplasm. Rac effector required for tissue morphogenesis, cell migrations and egg laying. May play a role in egg laying and in yolk protein clatherin-mediated endocytosis by oocytes during oogenesis. Plays a role in the formation of gap junctions between EA and EP endodermal precursor cells in embryos. This Caenorhabditis elegans protein is Membrane-associated protein gex-3.